The following is a 193-amino-acid chain: Probable chorismate pyruvate-lyase (193 aa).

Substrate is bound by residues R81, L119, and E177.

It belongs to the UbiC family.

Its subcellular location is the cytoplasm. The catalysed reaction is chorismate = 4-hydroxybenzoate + pyruvate. The protein operates within cofactor biosynthesis; ubiquinone biosynthesis. Its function is as follows. Removes the pyruvyl group from chorismate, with concomitant aromatization of the ring, to provide 4-hydroxybenzoate (4HB) for the ubiquinone pathway. The protein is Probable chorismate pyruvate-lyase of Idiomarina loihiensis (strain ATCC BAA-735 / DSM 15497 / L2-TR).